Consider the following 235-residue polypeptide: Phosphoribosylaminoimidazole-succinocarboxamide synthase (235 aa).

The protein belongs to the SAICAR synthetase family.

It catalyses the reaction 5-amino-1-(5-phospho-D-ribosyl)imidazole-4-carboxylate + L-aspartate + ATP = (2S)-2-[5-amino-1-(5-phospho-beta-D-ribosyl)imidazole-4-carboxamido]succinate + ADP + phosphate + 2 H(+). The protein operates within purine metabolism; IMP biosynthesis via de novo pathway; 5-amino-1-(5-phospho-D-ribosyl)imidazole-4-carboxamide from 5-amino-1-(5-phospho-D-ribosyl)imidazole-4-carboxylate: step 1/2. This Streptococcus sanguinis (strain SK36) protein is Phosphoribosylaminoimidazole-succinocarboxamide synthase.